The primary structure comprises 877 residues: Potassium transporter 23 (877 aa).

2 disordered regions span residues 1-60 and 72-92; these read MDDD…SLDG and ASAGGASGGGGGGGPLSRASS. Over 1-126 the chain is Cytoplasmic; that stretch reads MDDDDSGIQE…RGAHGHSSKE (126 aa). The segment covering 12–28 has biased composition (pro residues); sequence PAPPPPPPPPPPPPPPL. Gly residues predominate over residues 76-86; sequence GASGGGGGGGP. A helical transmembrane segment spans residues 127-147; sequence ISMLSTVAMAFQTLGVVYGDM. The Extracellular segment spans residues 148 to 173; that stretch reads GTSPLYVFSDVFSKVPIKSEVEILGA. The helical transmembrane segment at 174 to 194 threads the bilayer; the sequence is LSLVMYTIALIPFAKYVFIVL. Over 195 to 260 the chain is Cytoplasmic; the sequence is KANDNGEGGT…SLEKNPVFKN (66 aa). Residues 261 to 281 form a helical membrane-spanning segment; sequence ILLFLVLMGTSMVIGDGILTP. At 282-295 the chain is on the extracellular side; the sequence is SMSVMSAVSGLQGR. A helical membrane pass occupies residues 296-316; it reads VPGFGTDAVVIVSILFLVLLF. Over 317 to 325 the chain is Cytoplasmic; that stretch reads SVQRFGTGK. A helical membrane pass occupies residues 326 to 346; that stretch reads VGFMFAPILALWFINLGTIGI. Over 347–379 the chain is Extracellular; sequence YNLAKYDISVVRAFNPVYIYLFFQTNGIKAWSA. Residues 380-400 traverse the membrane as a helical segment; it reads LGGCVLCITGAEAMFADLGHF. Residues 401 to 406 are Cytoplasmic-facing; sequence SVKSIQ. Residues 407 to 427 form a helical membrane-spanning segment; it reads VAFTAVVFPCLLIAYMGQAAY. Over 428-441 the chain is Extracellular; sequence LMKYPFAVERIFYD. Residues 442–462 traverse the membrane as a helical segment; the sequence is SVPEILFWPVFVIATLAAMIA. Residues 463–498 lie on the Cytoplasmic side of the membrane; that stretch reads SQAMISATFSCIKQAMALGCFPRIKIIHTSKKVMGQ. Residues 499 to 519 form a helical membrane-spanning segment; the sequence is IYIPVMNWFLMVMCIIIVATF. Residues 520-524 are Extracellular-facing; sequence RSTND. The helical transmembrane segment at 525–545 threads the bilayer; it reads IANAYGIAEVGVMMVSTALVT. Residues 546–555 lie on the Cytoplasmic side of the membrane; sequence LVMLLIWQTN. The chain crosses the membrane as a helical span at residues 556 to 578; it reads LFLVMCFPVIFGSVEFVYLTAVL. The Extracellular portion of the chain corresponds to 579 to 583; that stretch reads SKIQE. The helical transmembrane segment at 584-604 threads the bilayer; sequence GGWLPLAFSSLFLCIMYTWNY. At 605-877 the chain is on the cytoplasmic side; sequence GSVLKYQSEM…IMRVGMTYMV (273 aa).

Belongs to the HAK/KUP transporter (TC 2.A.72.3) family.

Its subcellular location is the membrane. Its function is as follows. High-affinity potassium transporter. This is Potassium transporter 23 (HAK23) from Oryza sativa subsp. japonica (Rice).